The sequence spans 39 residues: MQRNPNPNNLPVELNRTSLYLGLLFVFVTGVLMSSYFFN.

Residues 18–38 traverse the membrane as a helical segment; it reads SLYLGLLFVFVTGVLMSSYFF.

This sequence belongs to the PsbL family. In terms of assembly, PSII is composed of 1 copy each of membrane proteins PsbA, PsbB, PsbC, PsbD, PsbE, PsbF, PsbH, PsbI, PsbJ, PsbK, PsbL, PsbM, PsbT, PsbX, PsbY, PsbZ, Psb30/Ycf12, peripheral proteins PsbO, CyanoQ (PsbQ), PsbU, PsbV and a large number of cofactors. It forms dimeric complexes.

The protein resides in the cellular thylakoid membrane. Functionally, one of the components of the core complex of photosystem II (PSII). PSII is a light-driven water:plastoquinone oxidoreductase that uses light energy to abstract electrons from H(2)O, generating O(2) and a proton gradient subsequently used for ATP formation. It consists of a core antenna complex that captures photons, and an electron transfer chain that converts photonic excitation into a charge separation. This subunit is found at the monomer-monomer interface and is required for correct PSII assembly and/or dimerization. This Parasynechococcus marenigrum (strain WH8102) protein is Photosystem II reaction center protein L.